A 236-amino-acid polypeptide reads, in one-letter code: uncharacterized protein (236 aa).

This sequence to E.coli YfjP and YkfA.

This is an uncharacterized protein from Escherichia coli (strain K12).